The primary structure comprises 81 residues: RNA-binding protein Hfq (81 aa).

One can recognise a Sm domain in the interval 11 to 71 (DIFLNNARKN…ISTITPTKPI (61 aa)).

It belongs to the Hfq family. Homohexamer.

Functionally, RNA chaperone that binds small regulatory RNA (sRNAs) and mRNAs to facilitate mRNA translational regulation in response to envelope stress, environmental stress and changes in metabolite concentrations. Also binds with high specificity to tRNAs. This is RNA-binding protein Hfq from Clostridium beijerinckii (strain ATCC 51743 / NCIMB 8052) (Clostridium acetobutylicum).